A 552-amino-acid chain; its full sequence is Putative pentatricopeptide repeat-containing protein At1g64310 (552 aa).

PPR repeat units follow at residues 39–69 (DPYFATQLARFYALNDDLISARKLFDVFPER), 70–104 (SVFLWNSIIRAYAKAHQFTTVLSLFSQILRSDTRP), 105–139 (DNFTYACLARGFSESFDTKGLRCIHGIAIVSGLGF), 140–170 (DQICGSAIVKAYSKAGLIVEASKLFCSIPDP), 171–205 (DLALWNVMILGYGCCGFWDKGINLFNLMQHRGHQP), 206–240 (NCYTMVALTSGLIDPSLLLVAWSVHAFCLKINLDS), 241–271 (HSYVGCALVNMYSRCMCIASACSVFNSISEP), 272–306 (DLVACSSLITGYSRCGNHKEALHLFAELRMSGKKP), 307–341 (DCVLVAIVLGSCAELSDSVSGKEVHSYVIRLGLEL), 342–372 (DIKVCSALIDMYSKCGLLKCAMSLFAGIPEK), 373–407 (NIVSFNSLILGLGLHGFASTAFEKFTEILEMGLIP), 408–438 (DEITFSALLCTCCHSGLLNKGQEIFERMKSE), and 444–474 (QTEHYVYMVKLMGMAGKLEEAFEFVMSLQKP). The interval 479–552 (ILGALLSCCE…GGKLPGISWF (74 aa)) is type E motif; degenerate.

It belongs to the PPR family. PCMP-E subfamily.

This chain is Putative pentatricopeptide repeat-containing protein At1g64310 (PCMP-E65), found in Arabidopsis thaliana (Mouse-ear cress).